A 246-amino-acid chain; its full sequence is Ribonuclease PH (246 aa).

Phosphate is bound by residues Arg-91 and 129-131 (GTR).

This sequence belongs to the RNase PH family. In terms of assembly, homohexameric ring arranged as a trimer of dimers.

It carries out the reaction tRNA(n+1) + phosphate = tRNA(n) + a ribonucleoside 5'-diphosphate. In terms of biological role, phosphorolytic 3'-5' exoribonuclease that plays an important role in tRNA 3'-end maturation. Removes nucleotide residues following the 3'-CCA terminus of tRNAs; can also add nucleotides to the ends of RNA molecules by using nucleoside diphosphates as substrates, but this may not be physiologically important. Probably plays a role in initiation of 16S rRNA degradation (leading to ribosome degradation) during starvation. The polypeptide is Ribonuclease PH (Paraburkholderia xenovorans (strain LB400)).